We begin with the raw amino-acid sequence, 102 residues long: Large ribosomal subunit protein uL24 (102 aa).

It belongs to the universal ribosomal protein uL24 family. Part of the 50S ribosomal subunit.

In terms of biological role, one of two assembly initiator proteins, it binds directly to the 5'-end of the 23S rRNA, where it nucleates assembly of the 50S subunit. Its function is as follows. One of the proteins that surrounds the polypeptide exit tunnel on the outside of the subunit. In Limosilactobacillus reuteri (strain DSM 20016) (Lactobacillus reuteri), this protein is Large ribosomal subunit protein uL24.